The following is a 536-amino-acid chain: SNW domain-containing protein 1 (536 aa).

The disordered stretch occupies residues 1-46 (MALTSFLPAPTQLSQDQLEAEEKARSQRSRQTSLVSSRREPPPYGY). An N-acetylalanine modification is found at alanine 2. Serine 14 is subject to Phosphoserine. Lysine 23 participates in a covalent cross-link: Glycyl lysine isopeptide (Lys-Gly) (interchain with G-Cter in SUMO2). An interaction with PPIL1 region spans residues 59 to 79 (GDGGAFPEIHVAQYPLDMGRK). Residues lysine 81, lysine 97, lysine 115, lysine 122, lysine 141, lysine 158, and lysine 170 each participate in a glycyl lysine isopeptide (Lys-Gly) (interchain with G-Cter in SUMO2) cross-link. Residues 174 to 339 (AQYIRYTPSQ…KARERRAGIK (166 aa)) are SNW. A phosphoserine mark is found at serine 182 and serine 190. Residue lysine 193 forms a Glycyl lysine isopeptide (Lys-Gly) (interchain with G-Cter in SUMO2) linkage. The disordered stretch occupies residues 209 to 233 (PPRFKINKKIPRGPPSPPAPVMHSP). Serine 224, serine 232, and serine 234 each carry phosphoserine. Glycyl lysine isopeptide (Lys-Gly) (interchain with G-Cter in SUMO2) cross-links involve residues lysine 240, lysine 258, lysine 286, lysine 339, lysine 344, lysine 416, lysine 441, and lysine 452. Residues 311–386 (KMAQKEKEKH…RSKLQRNENR (76 aa)) are disordered. Composition is skewed to basic and acidic residues over residues 472–489 (FVPD…RGRE) and 503–530 (KFLE…EHEG). The tract at residues 472 to 536 (FVPDKEFSGS…EHEGKKRRKE (65 aa)) is disordered. Residues serine 479 and serine 481 each carry the phosphoserine modification. Lysine 509 participates in a covalent cross-link: Glycyl lysine isopeptide (Lys-Gly) (interchain with G-Cter in SUMO2).

It belongs to the SNW family. Identified in the spliceosome C complex. Associates with U4/U6-U5 tri-small nuclear ribonucleoproteins (U4/U6-U5 tri-snRNPs). Component of the minor spliceosome, which splices U12-type introns. Interacts with SKI, SMAD2,SMAD3, RBPJ, RB1, PABPN1, MAGEA1, SIRT1, FOXN3, U2AF2, PPIL1, DAXX and ATP1B4. Interacts with VDR and RXRA; preferentially associates with VDR:RXRA heterodimers. Interacts with NCOR2. Interacts with MAML1. Interacts with NOTCH1 NICD; the interaction involves multimerized NOTCH1 NICD. Forms a complex with NOTCH1 NICD and MAML1; the association is dissociated by RBPJ. Associates with positive transcription elongation factor b (P-TEFb). Component of the SNARP complex which consists at least of SNIP1, SNW1, THRAP3, BCLAF1 and PNN.

Its subcellular location is the nucleus. In terms of biological role, involved in pre-mRNA splicing as component of the spliceosome. As a component of the minor spliceosome, involved in the splicing of U12-type introns in pre-mRNAs. Required in the specific splicing of CDKN1A pre-mRNA; the function probably involves the recruitment of U2AF2 to the mRNA. May recruit PPIL1 to the spliceosome. May be involved in cyclin-D1/CCND1 mRNA stability through the SNARP complex which associates with both the 3'end of the CCND1 gene and its mRNA. Involved in transcriptional regulation. Modulates TGF-beta-mediated transcription via association with SMAD proteins, MYOD1-mediated transcription via association with PABPN1, RB1-mediated transcriptional repression, and retinoid-X receptor (RXR)- and vitamin D receptor (VDR)-dependent gene transcription in a cell line-specific manner probably involving coactivators NCOA1 and GRIP1. Is involved in NOTCH1-mediated transcriptional activation. Binds to multimerized forms of Notch intracellular domain (NICD) and is proposed to recruit transcriptional coactivators such as MAML1 to form an intermediate preactivation complex which associates with DNA-bound CBF-1/RBPJ to form a transcriptional activation complex by releasing SNW1 and redundant NOTCH1 NICD. The polypeptide is SNW domain-containing protein 1 (SNW1) (Bos taurus (Bovine)).